Consider the following 165-residue polypeptide: Mid1-interacting protein 1-like (165 aa).

The tract at residues 46–67 (DQESHASVSHNNNNNNEPSFPN) is disordered.

The protein belongs to the SPOT14 family.

It is found in the nucleus. The protein resides in the cytoplasm. It localises to the cytoskeleton. Functionally, involved in stabilization of microtubules. May play a role in the regulation of lipogenesis. The protein is Mid1-interacting protein 1-like of Danio rerio (Zebrafish).